Here is a 634-residue protein sequence, read N- to C-terminus: Chaperone protein HtpG (634 aa).

Residues 1-344 form an a; substrate-binding region; that stretch reads MSETVSHNKE…SNDLPLNVSR (344 aa). The segment at 345–561 is b; that stretch reads EILQDNKVTQ…DFEMGTQMAK (217 aa). Residues 562–634 form a c region; it reads LLEAAGQAVP…GAINKLLTKV (73 aa).

It belongs to the heat shock protein 90 family. As to quaternary structure, homodimer.

Its subcellular location is the cytoplasm. Its function is as follows. Molecular chaperone. Has ATPase activity. The chain is Chaperone protein HtpG from Vibrio campbellii (strain ATCC BAA-1116).